Here is a 368-residue protein sequence, read N- to C-terminus: tRNA-specific 2-thiouridylase MnmA (368 aa).

Residues 11–18 and M37 each bind ATP; that span reads GMSGGVDS. Residues 97 to 99 form an interaction with target base in tRNA region; the sequence is NPD. Catalysis depends on C102, which acts as the Nucleophile. The cysteines at positions 102 and 199 are disulfide-linked. G127 contributes to the ATP binding site. The tract at residues 149 to 151 is interaction with tRNA; that stretch reads KDQ. Residue C199 is the Cysteine persulfide intermediate of the active site. The interaction with tRNA stretch occupies residues 311–312; sequence RY.

The protein belongs to the MnmA/TRMU family. In terms of assembly, interacts with TusE.

Its subcellular location is the cytoplasm. It catalyses the reaction S-sulfanyl-L-cysteinyl-[protein] + uridine(34) in tRNA + AH2 + ATP = 2-thiouridine(34) in tRNA + L-cysteinyl-[protein] + A + AMP + diphosphate + H(+). Functionally, catalyzes the 2-thiolation of uridine at the wobble position (U34) of tRNA(Lys), tRNA(Glu) and tRNA(Gln), leading to the formation of s(2)U34, the first step of tRNA-mnm(5)s(2)U34 synthesis. Sulfur is provided by IscS, via a sulfur-relay system. Binds ATP and its substrate tRNAs. The chain is tRNA-specific 2-thiouridylase MnmA from Salmonella paratyphi B (strain ATCC BAA-1250 / SPB7).